Consider the following 212-residue polypeptide: uncharacterized protein (212 aa).

Disordered regions lie at residues 1–25 (MARK…GRPN) and 165–212 (STSG…HWGG). The span at 202 to 212 (RSSSARGHWGG) shows a compositional bias: low complexity.

This is an uncharacterized protein from Escherichia coli (strain K12).